The sequence spans 310 residues: Acetyl-coenzyme A carboxylase carboxyl transferase subunit alpha (310 aa).

The CoA carboxyltransferase C-terminal domain occupies 31–285; it reads SFERELRIIN…KQKILRRLKQ (255 aa).

Belongs to the AccA family. Acetyl-CoA carboxylase is a heterohexamer composed of biotin carboxyl carrier protein (accB), biotin carboxylase (accC) and two subunits each of ACCase subunit alpha (accA) and ACCase subunit beta (accD).

Its subcellular location is the plastid. The protein localises to the chloroplast. The enzyme catalyses N(6)-carboxybiotinyl-L-lysyl-[protein] + acetyl-CoA = N(6)-biotinyl-L-lysyl-[protein] + malonyl-CoA. The protein operates within lipid metabolism; malonyl-CoA biosynthesis; malonyl-CoA from acetyl-CoA: step 1/1. Component of the acetyl coenzyme A carboxylase (ACC) complex. First, biotin carboxylase catalyzes the carboxylation of biotin on its carrier protein (BCCP) and then the CO(2) group is transferred by the carboxyltransferase to acetyl-CoA to form malonyl-CoA. In Cyanidioschyzon merolae (strain NIES-3377 / 10D) (Unicellular red alga), this protein is Acetyl-coenzyme A carboxylase carboxyl transferase subunit alpha.